A 547-amino-acid polypeptide reads, in one-letter code: DEAD-box ATP-dependent RNA helicase 31 (547 aa).

A compositionally biased stretch (acidic residues) spans Met1–Gly34. Positions Met1–Ser74 are disordered. Over residues Ile53–Gly70 the composition is skewed to basic and acidic residues. Positions Thr79 to Glu107 match the Q motif motif. The region spanning Leu110–Phe293 is the Helicase ATP-binding domain. Residue Ala123–Thr130 participates in ATP binding. The short motif at Asp241–Asp244 is the DEAD box element. The Helicase C-terminal domain occupies Leu327–Ala478.

It belongs to the DEAD box helicase family.

The catalysed reaction is ATP + H2O = ADP + phosphate + H(+). The protein is DEAD-box ATP-dependent RNA helicase 31 of Oryza sativa subsp. japonica (Rice).